A 117-amino-acid chain; its full sequence is Eukaryotic translation initiation factor 4E-binding protein 1 (117 aa).

2 stretches are compositionally biased toward polar residues: residues 1–12 (MSAGSSCSQTPS) and 33–47 (YSTT…TTPG). The interval 1-47 (MSAGSSCSQTPSRAIPTRRVALGDGVQLPPGDYSTTPGGTLFSTTPG) is disordered. The residue at position 2 (serine 2) is an N-acetylserine. A phosphothreonine mark is found at threonine 36 and threonine 40. Serine 43 is subject to Phosphoserine. Phosphothreonine occurs at positions 45 and 49. Tyrosine 53 carries the phosphotyrosine modification. The short motif at 53–59 (YDRKFLM) is the YXXXXLphi motif element. A Glycyl lysine isopeptide (Lys-Gly) (interchain with G-Cter in ubiquitin) cross-link involves residue lysine 56. A Phosphoserine modification is found at serine 64. Residues 64–117 (SPVAKTPPKDLPAIPGVTSPTSDEPPMQASQSQLPSSPEDKRAGGEESQFEMDI) are disordered. The residue at position 69 (threonine 69) is a Phosphothreonine. A compositionally biased stretch (polar residues) spans 81–99 (TSPTSDEPPMQASQSQLPS). 5 positions are modified to phosphoserine: serine 82, serine 95, serine 99, serine 100, and serine 111. Residues 113–117 (FEMDI) carry the TOS motif motif.

This sequence belongs to the eIF4E-binding protein family. Hypophosphorylated EIF4EBP1 competes with EIF4G1/EIF4G3 to interact with EIF4E; insulin stimulated MAP-kinase (MAPK1 and MAPK3) or mTORC1 phosphorylation of EIF4EBP1 causes dissociation of the complex allowing EIF4G1/EIF4G3 to bind and consequent initiation of translation. Interacts (via TOS motif) with RPTOR; promoting phosphorylation by mTORC1. Post-translationally, phosphorylated on serine and threonine residues in response to insulin, EGF and PDGF. Phosphorylation at Thr-36, Thr-45, Ser-64 and Thr-69, corresponding to the hyperphosphorylated form, is regulated by mTORC1 and abolishes binding to EIF4E. Ubiquitinated: when eIF4E levels are low, hypophosphorylated form is ubiquitinated by the BCR(KLHL25) complex, leading to its degradation and serving as a homeostatic mechanism to maintain translation and prevent eIF4E inhibition when eIF4E levels are low. Not ubiquitinated when hyperphosphorylated (at Thr-36, Thr-45, Ser-64 and Thr-69) or associated with eIF4E. In terms of tissue distribution, highest expression in fat cells.

The protein resides in the cytoplasm. Its subcellular location is the nucleus. Functionally, repressor of translation initiation that regulates EIF4E activity by preventing its assembly into the eIF4F complex: hypophosphorylated form competes with EIF4G1/EIF4G3 and strongly binds to EIF4E, leading to repress translation. In contrast, hyperphosphorylated form dissociates from EIF4E, allowing interaction between EIF4G1/EIF4G3 and EIF4E, leading to initiation of translation. Mediates the regulation of protein translation by hormones, growth factors and other stimuli that signal through the MAP kinase and mTORC1 pathways. The chain is Eukaryotic translation initiation factor 4E-binding protein 1 (Eif4ebp1) from Mus musculus (Mouse).